The following is a 306-amino-acid chain: Agmatinase (306 aa).

Mn(2+)-binding residues include His-126, Asp-149, His-151, Asp-153, Asp-230, and Asp-232.

Belongs to the arginase family. Agmatinase subfamily. Mn(2+) is required as a cofactor.

It carries out the reaction agmatine + H2O = urea + putrescine. It functions in the pathway amine and polyamine biosynthesis; putrescine biosynthesis via agmatine pathway; putrescine from agmatine: step 1/1. Functionally, catalyzes the formation of putrescine from agmatine. In Shigella boydii serotype 18 (strain CDC 3083-94 / BS512), this protein is Agmatinase.